The sequence spans 241 residues: SURF1-like protein (241 aa).

A run of 2 helical transmembrane segments spans residues 5–25 and 199–219; these read LTVL…LNRL and LEYA…YRIY.

The protein belongs to the SURF1 family.

Its subcellular location is the cell membrane. This chain is SURF1-like protein, found in Rickettsia bellii (strain RML369-C).